A 195-amino-acid chain; its full sequence is MEGHRKVELSEALALGPDWRHACHALLYAPDPRKLFGRIPMRFAVLMQMRFDGRLGFPGGFVDAQDSCLEDGLNRELREELGEAMSAFRVERSDYRSSHIAARPRVVAHFYAKRLTLEQLQAVEARAPQAKDHGLEVLGLVRVPLYVLRDGEGGLPAFLENSFIGAAREQLLEALQDLKLLDPGIIAKLKIPDSK.

One can recognise a Nudix hydrolase domain in the interval 18–173 (DWRHACHALL…IGAAREQLLE (156 aa)). Positions 24, 50, and 57 each coordinate substrate. Mn(2+)-binding residues include Gly59, Glu76, Glu80, and His99. The short motif at 61–82 (FVDAQDSCLEDGLNRELREELG) is the Nudix box element. Gln170 is a substrate binding site. Glu173 is a binding site for Mn(2+).

It belongs to the Nudix hydrolase family. NUDT16 subfamily. Homodimer. The cofactor is Mg(2+). Mn(2+) serves as cofactor. It depends on Co(2+) as a cofactor. As to expression, expressed in brain, testis, spleen, lung, heart, liver, kidney and muscle (at protein level).

Its subcellular location is the nucleus. It is found in the nucleolus. It localises to the nucleoplasm. The protein localises to the cytoplasm. The enzyme catalyses a 5'-end (N(7)-methyl 5'-triphosphoguanosine)-ribonucleoside in mRNA + H2O = N(7)-methyl-GDP + a 5'-end phospho-ribonucleoside in mRNA + 2 H(+). It carries out the reaction IDP + H2O = IMP + phosphate + H(+). It catalyses the reaction dIDP + H2O = dIMP + phosphate + H(+). The catalysed reaction is a 5'-end NAD(+)-phospho-ribonucleoside in mRNA + H2O = a 5'-end phospho-ribonucleoside in mRNA + NAD(+) + H(+). The enzyme catalyses a 5'-end FAD-phospho-ribonucleoside in mRNA + H2O = a 5'-end phospho-adenosine-phospho-ribonucleoside in mRNA + FMN + 2 H(+). It carries out the reaction a 5'-end CoA-ribonucleoside in mRNA + H2O = a 5'-end phospho-adenosine-phospho-ribonucleoside in mRNA + (R)-4'-phosphopantetheine + 2 H(+). Its function is as follows. RNA-binding and decapping enzyme that catalyzes the cleavage of the cap structure of snoRNAs and mRNAs in a metal-dependent manner. Part of the U8 snoRNP complex that is required for the accumulation of mature 5.8S and 28S rRNA. Has diphosphatase activity and removes m7G and/or m227G caps from U8 snoRNA and leaves a 5'monophosphate on the RNA. Also catalyzes the cleavage of the cap structure on mRNAs. Does not hydrolyze cap analog structures like 7-methylguanosine nucleoside triphosphate (m7GpppG). Also hydrolysis m7G- and m227G U3-capped RNAs but with less efficiencies. Has broad substrate specificity with manganese or cobalt as cofactor and can act on various RNA species. Binds to the U8 snoRNA; metal is not required for RNA-binding. May play a role in the regulation of snoRNAs and mRNAs degradation. Also acts as a phosphatase; hydrolyzes the non-canonical purine nucleotides inosine diphosphate (IDP) and deoxyinosine diphosphate (dITP) as well as guanosine diphosphate (GDP), deoxyguanosine diphosphate (dGDP), xanthine diphosphate (XDP), inosine triphosphate (ITP) and deoxyinosine triphosphate (ITP) to their respective monophosphate derivatives and does not distinguish between the deoxy- and ribose forms. The order of activity with different substrates is IDP &gt; dIDP &gt;&gt; GDP = dGDP &gt; XDP = ITP = dITP. Binds strongly to GTP, ITP and XTP. Participates in the hydrolysis of dIDP/IDP and probably excludes non-canonical purines from RNA and DNA precursor pools, thus preventing their incorporation into RNA and DNA and avoiding chromosomal lesions. Exhibits decapping activity towards NAD-capped RNAs and FAD-capped RNAs. Exhibits decapping activity towards dpCoA-capped RNAs in vitro. The polypeptide is U8 snoRNA-decapping enzyme (Nudt16) (Mus musculus (Mouse)).